The sequence spans 189 residues: Lutzicidin (189 aa).

Positions 1–22 (MQGFFWKTLLVVALCGTSSSLA) are cleaved as a signal peptide. Residues 23–155 (HRPLSYGEAL…DEEKDRPKRV (133 aa)) constitute a propeptide that is removed on maturation. Disulfide bonds link Cys79–Cys90 and Cys101–Cys118. A compositionally biased stretch (acidic residues) spans 125–148 (EEEEEDEEEQKAEVEKDEEKEDEE). A disordered region spans residues 125–152 (EEEEEDEEEQKAEVEKDEEKEDEEKDRP).

The protein belongs to the cathelicidin family. As to expression, expressed by the venom gland.

Its subcellular location is the secreted. It is found in the target cell membrane. Its function is as follows. Potent antimicrobial peptide against Gram-negative and Gram-positive bacteria. Adopts an amphipathic alpha helical conformation, that may allow to partition into the target membrane. Low hemolytic activities have been observed on mammalian cells. The sequence is that of Lutzicidin from Bothrops lutzi (Sertao lancehead).